Here is a 1049-residue protein sequence, read N- to C-terminus: Self-sufficient cytochrome P450 monooxygenase CYP505E4 (1049 aa).

Heme is bound at residue Cys-405. The tract at residues 462 to 492 is disordered; the sequence is ATALSQHNMSAGATSSPGSSAHPAGNKNAQD. Residues 471-486 show a composition bias toward low complexity; sequence SAGATSSPGSSAHPAG. The 142-residue stretch at 499 to 640 folds into the Flavodoxin-like domain; sequence ISFFYGSNSG…DLEVWEETNL (142 aa). Residues 505–509 and 584–616 each bind FMN; these read SNSGT and VFGCGHQDWTKTFYRIPILIDDLMHKAGATRLT. One can recognise an FAD-binding FR-type domain in the interval 678-906; that stretch reads RDLIEGKVTA…RPAKEAFHLP (229 aa).

This sequence in the N-terminal section; belongs to the cytochrome P450 family. FAD serves as cofactor. FMN is required as a cofactor. The cofactor is heme.

It carries out the reaction 2 oxidized [cytochrome P450] + NADPH = 2 reduced [cytochrome P450] + NADP(+) + H(+). The catalysed reaction is an organic molecule + reduced [NADPH--hemoprotein reductase] + O2 = an alcohol + oxidized [NADPH--hemoprotein reductase] + H2O + H(+). It catalyses the reaction dodecanoate + reduced [NADPH--hemoprotein reductase] + O2 = 5-hydroxydodecanoate + oxidized [NADPH--hemoprotein reductase] + H2O + H(+). The enzyme catalyses tetradecanoate + reduced [NADPH--hemoprotein reductase] + O2 = 7-hydroxytetradecanoate + oxidized [NADPH--hemoprotein reductase] + H2O + H(+). It carries out the reaction dodecan-1-ol + reduced [NADPH--hemoprotein reductase] + O2 = 1,5-dodecanediol + oxidized [NADPH--hemoprotein reductase] + H2O + H(+). The catalysed reaction is dodecan-1-ol + reduced [NADPH--hemoprotein reductase] + O2 = 1,4-dodecanediol + oxidized [NADPH--hemoprotein reductase] + H2O + H(+). It catalyses the reaction dodecan-1-ol + reduced [NADPH--hemoprotein reductase] + O2 = 1,6-dodecanediol + oxidized [NADPH--hemoprotein reductase] + H2O + H(+). In terms of biological role, self-sufficient cytochrome P450 monooxygenase that catalyzes the regioselective in-chain hydroxylation of alkanes, fatty alcohols, and fatty acids at the omega-7 position. Performs hydroxylation of C10-C16 n-alkanes and C12 and C14 fatty alcohols; and thereby enables the one step biocatalytic synthesis of rare alcohols such as 5-dodecanol and 7-tetradecanol. Converts 1-dodecanol into 1,5-dodecanediol as major product with very little sub-terminally hydroxylated products with the 1,4-dodecanediol and 1,6-dodecanediol more abundant. Converts dodecanoic acid to 5-hydroxydodecanoic acid which can be further converted into delta-dodecalactone by lactonization of the 5-hydroxy acid at low pH. Also gives sub-terminal hydroxylation of dodecanoic acid with 9-hydroxydodecanoic acid being the second most abundant product. This is Self-sufficient cytochrome P450 monooxygenase CYP505E4 from Penicillium freii.